A 445-amino-acid chain; its full sequence is MAAPEERELSQEQTEKLLQFQDLTGIESMDQCRQTLQQHNWNIEAAVQDRLNEQEGVPSVFNTTPNRPLQVNTADHRVYSYVVSRPQPRGLLGWGYYLIMLPFRITYYTLLDIFRFAVRFIRPDPRSRVTDPVGDVVSFIQLFEEKYGRIHPVFYQGTYSQALNDAKQELRFLLVYLHGEDHQDSDDFCRNTLCIPEVTNFLNSRMLFWACSTNKPEGFRVSQALRENTYPFLAMIMLKDRRMTVVGRLEGLIQPQDLINQLTFIVEANQTYLVSERLEREERNQTQVLRQQQDEAYLASLRADQEKERKKKEKQEQKRREEEEAQLKQMLEERKKRNLEEEKERKSECLPAEPVPDHPDNVKIIFKMPNGTRVERRFLFTQSLSVIHDFLFSLKETPEKFQIVTNFPRRVLPCLPSEEIPVPPTLQEAGLSQSQLLFVQDLTDD.

The region spanning 12–53 (EQTEKLLQFQDLTGIESMDQCRQTLQQHNWNIEAAVQDRLNE) is the UBA domain. Residues 275 to 353 (SERLEREERN…ERKSECLPAE (79 aa)) adopt a coiled-coil conformation. The span at 303-348 (ADQEKERKKKEKQEQKRREEEEAQLKQMLEERKKRNLEEEKERKSE) shows a compositional bias: basic and acidic residues. The segment at 303–354 (ADQEKERKKKEKQEQKRREEEEAQLKQMLEERKKRNLEEEKERKSECLPAEP) is disordered. The 83-residue stretch at 357–439 (DHPDNVKIIF…GLSQSQLLFV (83 aa)) folds into the UBX domain.

It localises to the cytoplasm. The protein localises to the lipid droplet. The protein resides in the endoplasmic reticulum. Its function is as follows. Plays an important role in endoplasmic reticulum-associated degradation (ERAD) that mediates ubiquitin-dependent degradation of misfolded endoplasmic reticulum proteins. Involved in inhibition of lipid droplet degradation. Involved in stress granule disassembly. This chain is FAS-associated factor 2 (faf2), found in Xenopus tropicalis (Western clawed frog).